The following is a 72-amino-acid chain: Translation initiation factor IF-1 (72 aa).

The region spanning 2–72 is the S1-like domain; that stretch reads AKEDVIEIQG…TKGRITYRFK (71 aa).

It belongs to the IF-1 family. As to quaternary structure, component of the 30S ribosomal translation pre-initiation complex which assembles on the 30S ribosome in the order IF-2 and IF-3, IF-1 and N-formylmethionyl-tRNA(fMet); mRNA recruitment can occur at any time during PIC assembly.

It localises to the cytoplasm. In terms of biological role, one of the essential components for the initiation of protein synthesis. Stabilizes the binding of IF-2 and IF-3 on the 30S subunit to which N-formylmethionyl-tRNA(fMet) subsequently binds. Helps modulate mRNA selection, yielding the 30S pre-initiation complex (PIC). Upon addition of the 50S ribosomal subunit IF-1, IF-2 and IF-3 are released leaving the mature 70S translation initiation complex. This Lactiplantibacillus plantarum (strain ATCC BAA-793 / NCIMB 8826 / WCFS1) (Lactobacillus plantarum) protein is Translation initiation factor IF-1.